We begin with the raw amino-acid sequence, 268 residues long: Short chain dehydrogenase/reductase dpchG (268 aa).

The NADP(+) site is built by Val-18, Asp-70, Asn-97, Lys-131, Tyr-165, and Lys-169. The active-site Proton acceptor is Tyr-165. Lys-169 acts as the Lowers pKa of active site Tyr in catalysis.

It belongs to the short-chain dehydrogenases/reductases (SDR) family.

It functions in the pathway secondary metabolite biosynthesis; terpenoid biosynthesis. Short chain dehydrogenase/reductase; part of the gene cluster that mediates the biosynthesis of the diterpenoid pyrones higginsianins A and B. The first step of the pathway is the synthesis of the alpha-pyrone moiety by the polyketide synthase dpchA via condensation of one acetyl-CoA starter unit with 3 malonyl-CoA units and 2 methylations. The alpha-pyrone is then combined with geranylgeranyl pyrophosphate (GGPP) formed by the GGPP synthase dpchD through the action of the prenyltransferase dpchC to yield a linear alpha-pyrone diterpenoid. Subsequent steps in the diterpenoid pyrone biosynthetic pathway involve the decalin core formation, which is initiated by the epoxidation of the C10-C11 olefin by the FAD-dependent oxidoreductase dpchE, and is followed by a cyclization cascade catalyzed by the terpene cyclase dpchB. The short chain dehydrogenase/reductase dpchG then oxidizes the 8S hydroxy group to a ketone and the short chain dehydrogenase/reductase dpchH reduces the ketone to the 8R hydroxy group to yield higginsianin B. Finally, the FAD-dependent oxidoreductase dpchF converts higginsianin B into higginsianin A. The chain is Short chain dehydrogenase/reductase dpchG from Colletotrichum higginsianum (strain IMI 349063) (Crucifer anthracnose fungus).